Here is a 943-residue protein sequence, read N- to C-terminus: 2-oxoglutarate dehydrogenase E1 component (943 aa).

This sequence belongs to the alpha-ketoglutarate dehydrogenase family. In terms of assembly, homodimer. Part of the 2-oxoglutarate dehydrogenase (OGDH) complex composed of E1 (2-oxoglutarate dehydrogenase), E2 (dihydrolipoamide succinyltransferase) and E3 (dihydrolipoamide dehydrogenase); the complex contains multiple copies of the three enzymatic components (E1, E2 and E3). Requires thiamine diphosphate as cofactor.

The enzyme catalyses N(6)-[(R)-lipoyl]-L-lysyl-[protein] + 2-oxoglutarate + H(+) = N(6)-[(R)-S(8)-succinyldihydrolipoyl]-L-lysyl-[protein] + CO2. Its function is as follows. E1 component of the 2-oxoglutarate dehydrogenase (OGDH) complex which catalyzes the decarboxylation of 2-oxoglutarate, the first step in the conversion of 2-oxoglutarate to succinyl-CoA and CO(2). The protein is 2-oxoglutarate dehydrogenase E1 component (sucA) of Azotobacter vinelandii.